The primary structure comprises 417 residues: Dibenzothiophene monooxygenase (417 aa).

FMN is bound by residues Tyr-96, 129–134, 159–163, Arg-282, 369–370, and His-391; these read NASSEN, KHFCS, and AR. A lid loop region spans residues 131-142; that stretch reads SSENNSHVLDWK.

The protein belongs to the DszC flavin monooxygenase family. Homotetramer. Homodimer. It depends on FAD as a cofactor. Requires NADH as cofactor.

The protein resides in the cytoplasm. The enzyme catalyses dibenzothiophene + 2 FMNH2 + 2 O2 = dibenzothiophene 5,5-dioxide + 2 FMN + 2 H2O + 2 H(+). It carries out the reaction dibenzothiophene + FMNH2 + O2 = dibenzothiophene 5-oxide + FMN + H2O + H(+). It catalyses the reaction dibenzothiophene 5-oxide + FMNH2 + O2 = dibenzothiophene 5,5-dioxide + FMN + H2O + H(+). It functions in the pathway sulfur metabolism; dibenzothiophene degradation. Functionally, catalyzes the first step of the '4S' desulfurization pathway that removes covalently bound sulfur from dibenzothiophene (DBT) without breaking carbon-carbon bonds. Sulfur dioxygenase which converts DBT to DBT-sulfone (DBTO2 or DBT 5,5-dioxide) in a stepwise manner. In DBTO (dibenzothiophene-5-oxide) was reported not to be a substrate, in it is reported to be a substrate. Can also use benzyl sulfide and benzyl sulfoxide as substrates, although benzyl sulfoxide is a poor substrate. The pathway substrate specificity has been augmented using mutagenesis, however no mutations allowed use of alkylated thiophenes. This is Dibenzothiophene monooxygenase from Rhodococcus qingshengii.